Here is a 167-residue protein sequence, read N- to C-terminus: Protein-export protein SecB (167 aa).

The interval 1–20 (MASNDDAPVGAANGNGNTGA) is disordered.

Belongs to the SecB family. As to quaternary structure, homotetramer, a dimer of dimers. One homotetramer interacts with 1 SecA dimer.

The protein localises to the cytoplasm. In terms of biological role, one of the proteins required for the normal export of preproteins out of the cell cytoplasm. It is a molecular chaperone that binds to a subset of precursor proteins, maintaining them in a translocation-competent state. It also specifically binds to its receptor SecA. In Mesorhizobium japonicum (strain LMG 29417 / CECT 9101 / MAFF 303099) (Mesorhizobium loti (strain MAFF 303099)), this protein is Protein-export protein SecB.